Reading from the N-terminus, the 551-residue chain is Chitinase (551 aa).

The first 17 residues, 1 to 17 (MLYKLLNVLWLVAVSNA), serve as a signal peptide directing secretion. The tract at residues 1-149 (MLYKLLNVLW…NKPGRREDKI (149 aa)) is chitin binding domain (CBD). Residues 148-548 (KIVAAYFVEW…NAINAQFKPK (401 aa)) enclose the GH18 domain. Asn173 carries an N-linked (GlcNAc...) asparagine; by host glycan. Glu305 functions as the Proton donor in the catalytic mechanism. Asn444 carries N-linked (GlcNAc...) asparagine; by host glycosylation. The Prevents secretion from ER motif lies at 548–551 (KDEL).

It belongs to the glycosyl hydrolase 18 family. Chitinase class II subfamily. In terms of assembly, interacts with host VCATH.

It localises to the host endoplasmic reticulum lumen. It carries out the reaction Random endo-hydrolysis of N-acetyl-beta-D-glucosaminide (1-&gt;4)-beta-linkages in chitin and chitodextrins.. Plays a role in host liquefaction to facilitate horizontal transmission of the virus by hydrolyzing beta-chitin and by regulating the cysteine protease VCATH. Localized in the host reticulum endoplasmic via its KDEL motif, interacts with and thus prevents VCATH secretion before host cell lysis occurs. This chain is Chitinase (CHIA), found in Lepidoptera (butterflies and moths).